A 397-amino-acid polypeptide reads, in one-letter code: Calponin-like protein clik-2 (397 aa).

Calponin-like repeat units follow at residues Leu-29–Ile-54, Leu-73–Val-98, Ile-119–Val-144, Leu-161–Thr-189, Thr-209–Leu-234, and Val-255–Gln-280. The tract at residues Glu-301–Glu-397 is disordered. A compositionally biased stretch (basic and acidic residues) spans Lys-321–Glu-332. Acidic residues-rich tracts occupy residues Val-344–Ile-360 and Glu-367–Glu-397.

It belongs to the calponin family. In terms of tissue distribution, expressed in pharyngeal muscle cells (at protein level).

Functionally, required for pharyngeal pumping. The polypeptide is Calponin-like protein clik-2 (Caenorhabditis elegans).